Consider the following 91-residue polypeptide: Small ribosomal subunit protein uS15 (91 aa).

It belongs to the universal ribosomal protein uS15 family. Part of the 30S ribosomal subunit. Forms a bridge to the 50S subunit in the 70S ribosome, contacting the 23S rRNA.

In terms of biological role, one of the primary rRNA binding proteins, it binds directly to 16S rRNA where it helps nucleate assembly of the platform of the 30S subunit by binding and bridging several RNA helices of the 16S rRNA. Its function is as follows. Forms an intersubunit bridge (bridge B4) with the 23S rRNA of the 50S subunit in the ribosome. The sequence is that of Small ribosomal subunit protein uS15 from Rickettsia africae (strain ESF-5).